Reading from the N-terminus, the 549-residue chain is Chaperonin GroEL 3 (549 aa).

ATP-binding positions include 29 to 32, 86 to 90, Gly-414, 477 to 479, and Asp-493; these read TLGP, DGTTT, and NAA.

It belongs to the chaperonin (HSP60) family. In terms of assembly, forms a cylinder of 14 subunits composed of two heptameric rings stacked back-to-back. Interacts with the co-chaperonin GroES.

The protein resides in the cytoplasm. The catalysed reaction is ATP + H2O + a folded polypeptide = ADP + phosphate + an unfolded polypeptide.. Functionally, together with its co-chaperonin GroES, plays an essential role in assisting protein folding. The GroEL-GroES system forms a nano-cage that allows encapsulation of the non-native substrate proteins and provides a physical environment optimized to promote and accelerate protein folding. In Frankia casuarinae (strain DSM 45818 / CECT 9043 / HFP020203 / CcI3), this protein is Chaperonin GroEL 3.